Reading from the N-terminus, the 210-residue chain is uncharacterized protein (210 aa).

Residues 2 to 91 (SRHPEVKWAQ…AEAKWWKKLV (90 aa)) form the CS domain. Positions 165-210 (GMGGMGGMDEFEDESDDEEEVSKPQDAEKAAEAGKSQESDAKTETS) are disordered. Positions 173–184 (DEFEDESDDEEE) are enriched in acidic residues. The segment covering 185–210 (VSKPQDAEKAAEAGKSQESDAKTETS) has biased composition (basic and acidic residues).

This is an uncharacterized protein from Oryza sativa subsp. indica (Rice).